The chain runs to 127 residues: Holo-[acyl-carrier-protein] synthase (127 aa).

Mg(2+) contacts are provided by aspartate 8 and glutamate 56.

The protein belongs to the P-Pant transferase superfamily. AcpS family. Mg(2+) serves as cofactor.

The protein localises to the cytoplasm. The enzyme catalyses apo-[ACP] + CoA = holo-[ACP] + adenosine 3',5'-bisphosphate + H(+). In terms of biological role, transfers the 4'-phosphopantetheine moiety from coenzyme A to a Ser of acyl-carrier-protein. The sequence is that of Holo-[acyl-carrier-protein] synthase from Caldanaerobacter subterraneus subsp. tengcongensis (strain DSM 15242 / JCM 11007 / NBRC 100824 / MB4) (Thermoanaerobacter tengcongensis).